Consider the following 86-residue polypeptide: Large ribosomal subunit protein uL24c (86 aa).

The protein belongs to the universal ribosomal protein uL24 family. In terms of assembly, part of the 50S ribosomal subunit.

Its subcellular location is the plastid. The protein resides in the chloroplast. One of two assembly initiator proteins, it binds directly to the 5'-end of the 23S rRNA, where it nucleates assembly of the 50S subunit. In Heterosigma akashiwo (strain NIES-293 / 8280G21-1), this protein is Large ribosomal subunit protein uL24c (rpl24).